The sequence spans 229 residues: C-&gt;U-editing enzyme APOBEC-1 (229 aa).

Residues Val10–Leu134 form the CMP/dCMP-type deaminase domain. Zn(2+) is bound at residue His61. The active-site Proton donor is the Glu63. Cys93 and Cys96 together coordinate Zn(2+).

The protein belongs to the cytidine and deoxycytidylate deaminase family. In terms of assembly, homodimer. Interacts with A1CF; form an mRNA editing complex. Interacts with RBM47; form an mRNA editing complex. Found in a complex with CELF2/CUGBP2 and A1CF. Interacts with HNRPAB. Interacts with SYNCRIP. It depends on Zn(2+) as a cofactor.

Its subcellular location is the cytoplasm. The protein resides in the nucleus. It catalyses the reaction a cytidine in mRNA + H2O + H(+) = a uridine in mRNA + NH4(+). It carries out the reaction cytidine(6666) in apoB mRNA + H2O + H(+) = uridine(6666) in apoB mRNA + NH4(+). Its function is as follows. Cytidine deaminase catalyzing the cytidine to uridine postranscriptional editing of a variety of mRNAs. Form complexes with cofactors that confer differential editing activity and selectivity. Responsible for the postranscriptional editing of a CAA codon for Gln to a UAA codon for stop in the apolipoprotein B mRNA. Also involved in CGA (Arg) to UGA (Stop) editing in the NF1 mRNA. May also play a role in the epigenetic regulation of gene expression by participating in DNA demethylation. This is C-&gt;U-editing enzyme APOBEC-1 from Mesocricetus auratus (Golden hamster).